Reading from the N-terminus, the 487-residue chain is GDP-Man:Man(3)GlcNAc(2)-PP-Dol alpha-1,2-mannosyltransferase (487 aa).

Residues 1-16 (MAGILCLCGMMRLLTA) lie on the Lumenal side of the membrane. Residues 17-37 (LFIPVLIASIGLCLVLVLLFI) traverse the membrane as a helical segment. Topologically, residues 38 to 231 (CTRLWIQRKK…SNNPVLSRLK (194 aa)) are cytoplasmic. The helical intramembrane region spans 232 to 252 (LIYYYLFAVIYGWVGSCSDVI). Residues 253–394 (MVNSTWTFAH…IGLHTMWNEH (142 aa)) are Cytoplasmic-facing. The helical intramembrane region spans 395-415 (FGIGIVECMAAGTIILAHNSG). The Cytoplasmic segment spans residues 416 to 487 (GPKLDIVVPY…FLASSEPLFM (72 aa)).

The protein belongs to the glycosyltransferase group 1 family. Glycosyltransferase 4 subfamily.

The protein localises to the endoplasmic reticulum membrane. It carries out the reaction an alpha-D-Man-(1-&gt;3)-[alpha-D-Man-(1-&gt;6)]-beta-D-Man-(1-&gt;4)-beta-D-GlcNAc-(1-&gt;4)-alpha-D-GlcNAc-diphospho-di-trans,poly-cis-dolichol + 2 GDP-alpha-D-mannose = an alpha-D-Man-(1-&gt;2)-alpha-D-Man-(1-&gt;2)-alpha-D-Man-(1-&gt;3)-[alpha-D-Man-(1-&gt;6)]-beta-D-Man-(1-&gt;4)-beta-D-GlcNAc-(1-&gt;4)-alpha-D-GlcNAc-diphospho-di-trans,poly-cis-dolichol + 2 GDP + 2 H(+). Its pathway is protein modification; protein glycosylation. GDP-Man:Man(3)GlcNAc(2)-PP-Dol alpha-1,2-mannosyltransferase that operates in the biosynthetic pathway of dolichol-linked oligosaccharides, the glycan precursors employed in protein asparagine (N)-glycosylation. The assembly of dolichol-linked oligosaccharides begins on the cytosolic side of the endoplasmic reticulum membrane and finishes in its lumen. The sequential addition of sugars to dolichol pyrophosphate produces dolichol-linked oligosaccharides containing fourteen sugars, including two GlcNAcs, nine mannoses and three glucoses. Once assembled, the oligosaccharide is transferred from the lipid to nascent proteins by oligosaccharyltransferases. Catalyzes, on the cytoplasmic face of the endoplasmic reticulum, the addition of the fourth and fifth mannose residues to the dolichol-linked oligosaccharide chain, to produce Man(5)GlcNAc(2)-PP-dolichol core oligosaccharide. Man(5)GlcNAc(2)-PP-dolichol is a substrate for ALG3, the following enzyme in the biosynthetic pathway. The protein is GDP-Man:Man(3)GlcNAc(2)-PP-Dol alpha-1,2-mannosyltransferase (alg11) of Xenopus tropicalis (Western clawed frog).